A 130-amino-acid polypeptide reads, in one-letter code: Small ribosomal subunit protein uS9 (130 aa).

It belongs to the universal ribosomal protein uS9 family.

This Streptococcus mutans serotype c (strain ATCC 700610 / UA159) protein is Small ribosomal subunit protein uS9.